A 451-amino-acid chain; its full sequence is Interferon regulatory factor 4 (451 aa).

A DNA-binding region (IRF tryptophan pentad repeat) is located at residues 21–129; that stretch reads NGKLRQWLID…DPYKVYRIVP (109 aa). Serine 447 and serine 448 each carry phosphoserine; by ROCK2.

The protein belongs to the IRF family. In terms of assembly, interacts with the BATF-JUNB heterodimer. Interacts with BATF (via bZIP domain); the interaction is direct. Interacts with SPIB. Interacts with DEF6. Directly interacts with NLRP3 in the nucleus of Th2 cells; this interaction enhances IRF4 ability to bind to the IL4 promoter and is required for optimal IRF4-dependent IL4 transcription. Interacts with SPI1. Post-translationally, phosphorylation by ROCK2 regulates IL-17 and IL-21 production. In terms of tissue distribution, lymphoid cells.

It is found in the nucleus. The protein localises to the cytoplasm. In terms of biological role, transcriptional activator. Binds to the interferon-stimulated response element (ISRE) of the MHC class I promoter. Binds the immunoglobulin lambda light chain enhancer, together with PU.1. Probably plays a role in ISRE-targeted signal transduction mechanisms specific to lymphoid cells. Involved in CD8(+) dendritic cell differentiation by forming a complex with the BATF-JUNB heterodimer in immune cells, leading to recognition of AICE sequence (5'-TGAnTCA/GAAA-3'), an immune-specific regulatory element, followed by cooperative binding of BATF and IRF4 and activation of genes. This Homo sapiens (Human) protein is Interferon regulatory factor 4.